Reading from the N-terminus, the 207-residue chain is Outer-membrane lipoprotein LolB (207 aa).

A signal peptide spans 1 to 21; it reads MPLPDFRLIRLLPLAALVLTA. Cys-22 carries the N-palmitoyl cysteine lipid modification. Cys-22 is lipidated: S-diacylglycerol cysteine.

This sequence belongs to the LolB family. In terms of assembly, monomer.

Its subcellular location is the cell outer membrane. In terms of biological role, plays a critical role in the incorporation of lipoproteins in the outer membrane after they are released by the LolA protein. This chain is Outer-membrane lipoprotein LolB, found in Shigella dysenteriae serotype 1 (strain Sd197).